The following is a 66-amino-acid chain: Panusin (66 aa).

The first 22 residues, 1–22 (MKTKAVLMLMLLVLVAATLVQG), serve as a signal peptide directing secretion. A propeptide spanning residues 23-26 (EPEP) is cleaved from the precursor. 3 disulfide bridges follow: Cys32–Cys54, Cys39–Cys61, and Cys44–Cys60. Position 65 is a tyrosine amide (Tyr65).

As to quaternary structure, forms dimers and higher-order oligomers. In terms of processing, contains 3 disulfide bonds.

Its function is as follows. Antimicrobial peptide. Has antibacterial activity against Gram-positive bacteria S.aureus ATCC 29737 and B.subtilis ATCC 6633 as well as against Gram-negative bacteria E.coli ATCC 10536 and K.pneumoniae ATCC 10031. In Panulirus argus (Caribbean spiny lobster), this protein is Panusin.